A 309-amino-acid polypeptide reads, in one-letter code: Probable lipid kinase YegS-like (309 aa).

Residues 1 to 134 (MAPSHWRLIL…IDLLRIDADH (134 aa)) form the DAGKc domain. ATP contacts are provided by residues T39, 65-71 (GDGTLSE), and T96. Mg(2+) is bound by residues L219, D222, and L224. The active-site Proton acceptor is E280.

Belongs to the diacylglycerol/lipid kinase family. YegS lipid kinase subfamily. Mg(2+) serves as cofactor. Ca(2+) is required as a cofactor.

It localises to the cytoplasm. Functionally, probably phosphorylates lipids; the in vivo substrate is unknown. The polypeptide is Probable lipid kinase YegS-like (Xanthomonas campestris pv. campestris (strain 8004)).